The primary structure comprises 277 residues: MIOREX complex component 2 (277 aa).

Belongs to the NAD(P)-dependent epimerase/dehydratase family. In terms of assembly, associates with the mitochondrial ribosome. Component of a multi-subunit COQ enzyme complex.

It is found in the mitochondrion. It functions in the pathway cofactor biosynthesis; ubiquinone biosynthesis. Its function is as follows. Component of MIOREX complexes, large expressome-like assemblies of ribosomes with factors involved in all the steps of post-transcriptional gene expression. Component of a multi-subunit COQ enzyme complex required for coenzyme Q biosynthesis. This chain is MIOREX complex component 2, found in Saccharomyces cerevisiae (strain ATCC 204508 / S288c) (Baker's yeast).